The following is a 444-amino-acid chain: Trigger factor (444 aa).

The 86-residue stretch at 170-255 (NDIAVIDFVG…LKAIKQLEIT (86 aa)) folds into the PPIase FKBP-type domain.

This sequence belongs to the FKBP-type PPIase family. Tig subfamily.

It is found in the cytoplasm. It catalyses the reaction [protein]-peptidylproline (omega=180) = [protein]-peptidylproline (omega=0). Functionally, involved in protein export. Acts as a chaperone by maintaining the newly synthesized protein in an open conformation. Functions as a peptidyl-prolyl cis-trans isomerase. In Mycoplasma pneumoniae (strain ATCC 29342 / M129 / Subtype 1) (Mycoplasmoides pneumoniae), this protein is Trigger factor (tig).